The following is a 134-amino-acid chain: Profilin-2 (134 aa).

A disulfide bridge connects residues Cys-13 and Cys-118. Residues 84–100 (AVIRGKKGSGGITIKKT) carry the Involved in PIP2 interaction motif. Thr-114 carries the phosphothreonine modification.

Belongs to the profilin family. As to quaternary structure, occurs in many kinds of cells as a complex with monomeric actin in a 1:1 ratio. Phosphorylated by MAP kinases.

Its subcellular location is the cytoplasm. It is found in the cytoskeleton. In terms of biological role, binds to actin and affects the structure of the cytoskeleton. At high concentrations, profilin prevents the polymerization of actin, whereas it enhances it at low concentrations. This chain is Profilin-2, found in Olea europaea (Common olive).